The sequence spans 596 residues: Putative terpene synthase 3, chloroplastic (596 aa).

The N-terminal 46 residues, 1-46, are a transit peptide targeting the chloroplast; sequence MATLSMQVSTLSKQVKNLNTFGMGSASKLPMVARRVSTIRLRPICS. Aspartate 349 and aspartate 353 together coordinate Mn(2+). Residues 349–353 carry the DDXXD motif motif; it reads DDVYD. Homodimerization regions lie at residues 355 to 361 and 427 to 464; these read YGTLDEL and EAKW…FTLP. Aspartate 493 and glutamate 501 together coordinate Mn(2+).

Belongs to the terpene synthase family. As to quaternary structure, homodimer. It depends on Mn(2+) as a cofactor. The cofactor is Mg(2+).

The protein localises to the plastid. It localises to the chloroplast. It functions in the pathway secondary metabolite biosynthesis; terpenoid biosynthesis. In terms of biological role, putative monoterpene synthase. This Thymus vulgaris (Thyme) protein is Putative terpene synthase 3, chloroplastic.